A 159-amino-acid chain; its full sequence is Ribosomal RNA large subunit methyltransferase H (159 aa).

S-adenosyl-L-methionine is bound by residues leucine 76, glycine 108, and leucine 127–phenylalanine 132.

The protein belongs to the RNA methyltransferase RlmH family. Homodimer.

Its subcellular location is the cytoplasm. The enzyme catalyses pseudouridine(1915) in 23S rRNA + S-adenosyl-L-methionine = N(3)-methylpseudouridine(1915) in 23S rRNA + S-adenosyl-L-homocysteine + H(+). Functionally, specifically methylates the pseudouridine at position 1915 (m3Psi1915) in 23S rRNA. The chain is Ribosomal RNA large subunit methyltransferase H from Syntrophomonas wolfei subsp. wolfei (strain DSM 2245B / Goettingen).